The sequence spans 317 residues: Ribose-phosphate pyrophosphokinase (317 aa).

ATP contacts are provided by residues 43–45 (DGE) and 102–103 (RQ). Positions 136 and 175 each coordinate Mg(2+). The active site involves Lys198. D-ribose 5-phosphate-binding positions include Arg200, Asp224, and 228 to 232 (DTAGT).

The protein belongs to the ribose-phosphate pyrophosphokinase family. Class I subfamily. Homohexamer. Mg(2+) is required as a cofactor.

It localises to the cytoplasm. It carries out the reaction D-ribose 5-phosphate + ATP = 5-phospho-alpha-D-ribose 1-diphosphate + AMP + H(+). It participates in metabolic intermediate biosynthesis; 5-phospho-alpha-D-ribose 1-diphosphate biosynthesis; 5-phospho-alpha-D-ribose 1-diphosphate from D-ribose 5-phosphate (route I): step 1/1. Functionally, involved in the biosynthesis of the central metabolite phospho-alpha-D-ribosyl-1-pyrophosphate (PRPP) via the transfer of pyrophosphoryl group from ATP to 1-hydroxyl of ribose-5-phosphate (Rib-5-P). This chain is Ribose-phosphate pyrophosphokinase, found in Corynebacterium ammoniagenes (Brevibacterium ammoniagenes).